The chain runs to 102 residues: Large ribosomal subunit protein bL21 (102 aa).

It belongs to the bacterial ribosomal protein bL21 family. In terms of assembly, part of the 50S ribosomal subunit. Contacts protein L20.

Functionally, this protein binds to 23S rRNA in the presence of protein L20. In Exiguobacterium sibiricum (strain DSM 17290 / CCUG 55495 / CIP 109462 / JCM 13490 / 255-15), this protein is Large ribosomal subunit protein bL21.